The following is a 370-amino-acid chain: MLSPDVLKKLEAIEQRFEELTQLLSDPAVAGNGDRFRKVAKERASIEQTVTALRAYRKLLDDVAGNEALLGDKDPELRELAKEELAQLRPQVEPAEEQLKLYLVPKDPNDEKDVIVEIRAGAGGDEAGLFAAEVMRMYVRYAERRGWRVELMDTSGGALGGVKEATLTVSGDAVYSSLKYESGVHRVQRVPATEAQGRIHTSTVTVAVMPEAEEIDVQVNPADVEMDVFRSTGSGGQSVNTTDSAVRLTHKPTGIVVKCQQEKSQLKNRTMAMKMLRAKLFEIEQERQRSARDATRKSQVGTGDRSEKIRTYNFPQDRLTDHRVNYTRHNLPAVMDGDVQDVIDACRTFYAAQALREASRGDAGAAERRA.

Gln-237 bears the N5-methylglutamine mark. The span at 286–296 (ERQRSARDATR) shows a compositional bias: basic and acidic residues. Residues 286-310 (ERQRSARDATRKSQVGTGDRSEKIR) are disordered.

It belongs to the prokaryotic/mitochondrial release factor family. Post-translationally, methylated by PrmC. Methylation increases the termination efficiency of RF1.

The protein resides in the cytoplasm. Peptide chain release factor 1 directs the termination of translation in response to the peptide chain termination codons UAG and UAA. The chain is Peptide chain release factor 1 from Anaeromyxobacter dehalogenans (strain 2CP-C).